The following is a 1088-amino-acid chain: DNA damage-binding protein 1b (1088 aa).

It belongs to the DDB1 family. As to quaternary structure, interacts with DDA1. Binds to KTN80.2/DWA3. Interacts with HTD1.

The protein resides in the nucleus. Its pathway is protein modification; protein ubiquitination. Its function is as follows. Component of light signal transduction machinery. Involved in repression of photomorphogenesis in darkness. Plays a role in DNA repair by forming with DDB2 the UV-damaged DNA-binding protein complex (UV-DDB). This is DNA damage-binding protein 1b from Arabidopsis thaliana (Mouse-ear cress).